The primary structure comprises 413 residues: Aspartate aminotransferase, cytoplasmic (413 aa).

L-aspartate is bound by residues Gly-39 and Trp-141. Position 149 is a phosphoserine (Ser-149). Residue Asn-195 coordinates L-aspartate. Residue Lys-259 is modified to N6-(pyridoxal phosphate)lysine. Arg-387 serves as a coordination point for L-aspartate.

Belongs to the class-I pyridoxal-phosphate-dependent aminotransferase family. In terms of assembly, homodimer. It depends on pyridoxal 5'-phosphate as a cofactor.

Its subcellular location is the cytoplasm. It carries out the reaction L-aspartate + 2-oxoglutarate = oxaloacetate + L-glutamate. It catalyses the reaction L-cysteine + 2-oxoglutarate = 2-oxo-3-sulfanylpropanoate + L-glutamate. The enzyme catalyses (2S)-2-aminobutanoate + 2-oxoglutarate = 2-oxobutanoate + L-glutamate. The catalysed reaction is 3-sulfino-L-alanine + 2-oxoglutarate = 3-sulfinopyruvate + L-glutamate. In terms of biological role, biosynthesis of L-glutamate from L-aspartate or L-cysteine. Important regulator of levels of glutamate, the major excitatory neurotransmitter of the vertebrate central nervous system. Acts as a scavenger of glutamate in brain neuroprotection. The aspartate aminotransferase activity is involved in hepatic glucose synthesis during development and in adipocyte glyceroneogenesis. Using L-cysteine as substrate, regulates levels of mercaptopyruvate, an important source of hydrogen sulfide. Mercaptopyruvate is converted into H(2)S via the action of 3-mercaptopyruvate sulfurtransferase (3MST). Hydrogen sulfide is an important synaptic modulator and neuroprotectant in the brain. In Pongo abelii (Sumatran orangutan), this protein is Aspartate aminotransferase, cytoplasmic.